Here is a 316-residue protein sequence, read N- to C-terminus: Serine protease 45 (316 aa).

The signal sequence occupies residues 1–38; sequence MAASLSRLSAGLAASRPLGLSRSFLLLVLLLLNSGYKG. The Peptidase S1 domain maps to 49–290; the sequence is WWPKNLDLSR…YSRWIKKQIS (242 aa). A disulfide bridge links C74 with C90. H89 functions as the Charge relay system in the catalytic mechanism. A glycan (N-linked (GlcNAc...) asparagine) is linked at N110. D137 serves as the catalytic Charge relay system. N162 and N186 each carry an N-linked (GlcNAc...) asparagine glycan. 3 cysteine pairs are disulfide-bonded: C171–C248, C206–C229, and C238–C266. S242 (charge relay system) is an active-site residue.

The protein belongs to the peptidase S1 family.

It is found in the secreted. In Bos taurus (Bovine), this protein is Serine protease 45 (PRSS45).